A 209-amino-acid polypeptide reads, in one-letter code: Large ribosomal subunit protein uL3 (209 aa).

The interval 133-153 (THGNSLSHRVPGSIGQNQTPG) is disordered. Q150 carries the post-translational modification N5-methylglutamine.

This sequence belongs to the universal ribosomal protein uL3 family. As to quaternary structure, part of the 50S ribosomal subunit. Forms a cluster with proteins L14 and L19. Post-translationally, methylated by PrmB.

One of the primary rRNA binding proteins, it binds directly near the 3'-end of the 23S rRNA, where it nucleates assembly of the 50S subunit. This is Large ribosomal subunit protein uL3 from Pectobacterium carotovorum subsp. carotovorum (strain PC1).